The primary structure comprises 451 residues: Serine--tRNA ligase, cytoplasmic (451 aa).

Residues Cys213 and Cys244 are joined by a disulfide bond. 238 to 240 (TAE) provides a ligand contact to L-serine. ATP-binding positions include 269 to 271 (RKE) and Val285. An L-serine-binding site is contributed by Glu292. 358 to 361 (ELVS) lines the ATP pocket. L-serine is bound at residue Thr396.

This sequence belongs to the class-II aminoacyl-tRNA synthetase family. Type-1 seryl-tRNA synthetase subfamily. In terms of assembly, homodimer. The tRNA molecule binds across the dimer.

It localises to the cytoplasm. The protein resides in the cytosol. The catalysed reaction is tRNA(Ser) + L-serine + ATP = L-seryl-tRNA(Ser) + AMP + diphosphate + H(+). In terms of biological role, catalyzes the attachment of serine to tRNA(Ser) in a two-step reaction: serine is first activated by ATP to form Ser-AMP and then transferred to the acceptor end of tRNA(Ser). The polypeptide is Serine--tRNA ligase, cytoplasmic (Arabidopsis thaliana (Mouse-ear cress)).